The primary structure comprises 52 residues: Large ribosomal subunit protein bL33 (52 aa).

The protein belongs to the bacterial ribosomal protein bL33 family.

The polypeptide is Large ribosomal subunit protein bL33 (rpmG) (Chlamydia pneumoniae (Chlamydophila pneumoniae)).